The primary structure comprises 538 residues: uncharacterized protein (538 aa).

The N-terminal stretch at 1 to 17 (MSFSATILFSPPSGSEA) is a signal peptide. A disordered region spans residues 101–131 (RQGKVSIPDEDGESRAHSSPPEEPGPLKESP). Glycyl lysine isopeptide (Lys-Gly) (interchain with G-Cter in SUMO2) cross-links involve residues lysine 128 and lysine 221. Residue serine 224 is modified to Phosphoserine. Residues 233 to 253 (RATPETGPENGTKLPPPRPED) form a disordered region. 2 positions are modified to phosphoserine: serine 285 and serine 428. Residues 488-523 (LPPELYNPNFQEEEDEGGDENAPGSPSFDQPHKTCC) are disordered.

It localises to the secreted. This is an uncharacterized protein from Homo sapiens (Human).